A 154-amino-acid chain; its full sequence is Minor structural pilin EpdC (154 aa).

Positions 1-13 (MIKMLQLPFNKKG) are excised as a propeptide. Positions 14 to 24 (QVSFDFIIAML) match the QXSXEXXXL motif.

In terms of processing, the N-terminus is cleaved by the prepilin peptidase EppA, which recognizes the class III signal sequence.

It is found in the secreted. The protein localises to the cell surface. Its subcellular location is the fimbrium. In terms of biological role, minor component of the type IV-like pili. Essential for pili formation. In Methanococcus maripaludis (strain DSM 14266 / JCM 13030 / NBRC 101832 / S2 / LL), this protein is Minor structural pilin EpdC.